The chain runs to 273 residues: MSELRFVRLGFGEQAVEYTEAWQKQREVHADRFEDRVPDTCLLLEHPPVYTAGRRTAESERPLDGTPVVDVDRGGKITWHGPGQLVGYPIQKLPRPVDVVAHVRRLEEALIRTAADFGVETSRIEGRSGVWVLGDPVERRQALGGLSLDFDPRLQDEEFDPRLNGPEYAPSNAGQRREDRKLAAIGIRVAKGVTMHGFALNVNPDNTWFDRIVPCGIRDAGVTSLSAELGREVTVEEVLPVAERHLRDILENAELAPRAVEQPKAAAPAPAPA.

Positions 35 to 254 (DRVPDTCLLL…HLRDILENAE (220 aa)) constitute a BPL/LPL catalytic domain. Substrate contacts are provided by residues 73 to 80 (RGGKITWH), 184 to 186 (AIG), and 197 to 199 (GFA). C215 acts as the Acyl-thioester intermediate in catalysis.

It belongs to the LipB family.

Its subcellular location is the cytoplasm. It catalyses the reaction octanoyl-[ACP] + L-lysyl-[protein] = N(6)-octanoyl-L-lysyl-[protein] + holo-[ACP] + H(+). Its pathway is protein modification; protein lipoylation via endogenous pathway; protein N(6)-(lipoyl)lysine from octanoyl-[acyl-carrier-protein]: step 1/2. In terms of biological role, catalyzes the transfer of endogenously produced octanoic acid from octanoyl-acyl-carrier-protein onto the lipoyl domains of lipoate-dependent enzymes. Lipoyl-ACP can also act as a substrate although octanoyl-ACP is likely to be the physiological substrate. The polypeptide is Octanoyltransferase (Streptomyces griseus subsp. griseus (strain JCM 4626 / CBS 651.72 / NBRC 13350 / KCC S-0626 / ISP 5235)).